The primary structure comprises 443 residues: KH domain-containing, RNA-binding, signal transduction-associated protein 1 (443 aa).

Positions 1-96 (MQRRDDPAAR…LPPSATASVK (96 aa)) are disordered. Low complexity predominate over residues 10–21 (RMSRSSGRSGSM). Ser18, Ser20, and Ser29 each carry phosphoserine. Residue Thr33 is modified to Phosphothreonine. Arg45 is modified (asymmetric dimethylarginine; by PRMT1). Residue Arg52 is modified to Asymmetric dimethylarginine; partial; by PRMT1. The residue at position 58 (Ser58) is a Phosphoserine. Thr84 is subject to Phosphothreonine; by MAPK1. Glycyl lysine isopeptide (Lys-Gly) (interchain with G-Cter in SUMO2) cross-links involve residues Lys96 and Lys102. The segment at 100–260 (ENKYLPELMA…VKKFLVPDMM (161 aa)) is involved in homodimerization. A Phosphoserine modification is found at Ser113. A Glycyl lysine isopeptide (Lys-Gly) (interchain with G-Cter in SUMO2) cross-link involves residue Lys139. Ser150 bears the Phosphoserine mark. Residues 171–197 (NFVGKILGPQGNTIKRLQEETGAKISV) enclose the KH domain. An N6-acetyllysine; alternate modification is found at Lys175. A Glycyl lysine isopeptide (Lys-Gly) (interchain with G-Cter in SUMO2); alternate cross-link involves residue Lys175. Thr183 carries the post-translational modification Phosphothreonine. The segment covering 280–293 (PSRGRGVPVRGRGA) has biased composition (low complexity). A disordered region spans residues 280 to 316 (PSRGRGVPVRGRGAAPPPPPVPRGRGVGPPRGALVRG). Omega-N-methylarginine occurs at positions 282, 284, and 291. The residue at position 304 (Arg304) is an Asymmetric dimethylarginine; by PRMT1. Over residues 307–316 (GPPRGALVRG) the composition is skewed to low complexity. Residues Arg310, Arg315, Arg320, and Arg325 each carry the omega-N-methylarginine; by PRMT1 modification. A Dimethylated arginine; in A2780 ovarian carcinoma cell line modification is found at Arg320. The disordered stretch occupies residues 327-346 (ATVTRGVPPPPTVRGAPAPR). 2 positions are modified to dimethylated arginine; in A2780 ovarian carcinoma cell line: Arg331 and Arg340. The residue at position 331 (Arg331) is an Asymmetric dimethylarginine; alternate. Residue Arg331 is modified to Omega-N-methylarginine; by PRMT1; alternate. An Omega-N-methylarginine; by PRMT1 modification is found at Arg340. The interval 351 to 443 (GIQRIPLPPP…AYREHPYGRY (93 aa)) is interaction with HNRNPA1. Tyr387 carries the phosphotyrosine modification. At Ser390 the chain carries Phosphoserine. Residues 400 to 420 (GHGEVQDSYEAYGQDDWNGTR) form an interaction with ZBTB7A region. Residues 411–443 (YGQDDWNGTRPSLKAPPARPVKGAYREHPYGRY) are disordered. Lys432 participates in a covalent cross-link: Glycyl lysine isopeptide (Lys-Gly) (interchain with G-Cter in SUMO2). Residues 434 to 443 (AYREHPYGRY) are compositionally biased toward basic and acidic residues. Phosphotyrosine; by PTK6 occurs at positions 435, 440, and 443.

Belongs to the KHDRBS family. As to quaternary structure, self-associates to form homooligomers when bound to RNA, oligomerization appears to be limited when binding to proteins; dimerization increases RNA affinity. Forms a trimeric complex in the nucleus consisting of BANP, HDAC6 and KHDRBS1/SAM68; HDAC6 keeps KHDRBS1 in a deacetylated state which inhibits the inclusion of CD44 alternate exons. The complex is disrupted by MAPK1/MAPK3-mediated phosphorylation of BANP which results in BANP export to the cytoplasm. This facilitates acetylation of KHDRBS1 and CD44 variant exon inclusion. Interacts with KHDRBS3/SLIM-2. Interacts with KHDRBS2/SLIM-1; heterooligomer formation of KHDRBS family proteins may modulate RNA substrate specificity. Interacts with RASA1, LCK, FYN, PTPN6, PLCG1, GRB2, CBL, JAK3, PIK3R, STAT3, APC, HNRNPA1. Interacts with PTK6 (via SH3 and SH2 domains). Forms a complex with ILF2, ILF3, YLPM1, RBMX, NCOA5 and PPP1CA. Does not interact with TPR. Interacts with PRMT1. Binds WBP4/FBP21 (via WW domains), FNBP4/FBP30 (via WW domains). Interacts (via Arg/Gly-rich-flanked Pro-rich regions) with FYN (via the SH3 domain). Interacts with the non-receptor tyrosine kinase SRMS; the interaction leads to phosphorylation of KHDRBS1. Interacts with ZBTB7A; negatively regulates KHDRBS1 splicing activity toward BCL2L1. Tyrosine phosphorylated by several non-receptor tyrosine kinases including LCK, FYN and JAK3. Also tyrosine phosphorylated by the non-receptor tyrosine kinase SRMS in an EGF-dependent manner. Negatively correlates with ability to bind RNA but required for many interactions with proteins. Phosphorylation by PTK6 negatively regulates its RNA binding ability. Phosphorylation by PTK6 at Tyr-440 dictates the nuclear localization of KHDRBS1. Phosphorylation at Tyr-387 disrupts interaction with APC. Phosphorylation at tyrosine residues by FYN inverts activity on modulation of BCL2L1 alternative splicing. Post-translationally, acetylated. Positively correlates with ability to bind RNA. Deacetylated by HDAC6; this regulates alternative splicing by inhibiting the inclusion of CD44 alternate exons. In terms of processing, arginine methylation is required for nuclear localization. Also can affect interaction with other proteins. Inhibits interaction with Src-like SH3 domains, but not interaction with WW domains of WBP4/FBP21 and FNBP4/FBP30. Ubiquitously expressed in all tissue examined. Isoform 1 is expressed at lower levels in brain, skeletal muscle, and liver whereas isoform 3 is intensified in skeletal muscle and in liver.

The protein resides in the nucleus. It localises to the cytoplasm. The protein localises to the membrane. Recruited and tyrosine phosphorylated by several receptor systems, for example the T-cell, leptin and insulin receptors. Once phosphorylated, functions as an adapter protein in signal transduction cascades by binding to SH2 and SH3 domain-containing proteins. Role in G2-M progression in the cell cycle. Represses CBP-dependent transcriptional activation apparently by competing with other nuclear factors for binding to CBP. Also acts as a putative regulator of mRNA stability and/or translation rates and mediates mRNA nuclear export. Positively regulates the association of constitutive transport element (CTE)-containing mRNA with large polyribosomes and translation initiation. According to some authors, is not involved in the nucleocytoplasmic export of unspliced (CTE)-containing RNA species according to. RNA-binding protein that plays a role in the regulation of alternative splicing and influences mRNA splice site selection and exon inclusion. Binds to RNA containing 5'-[AU]UAA-3' as a bipartite motif spaced by more than 15 nucleotides. Binds poly(A). Can regulate CD44 alternative splicing in a Ras pathway-dependent manner. In cooperation with HNRNPA1 modulates alternative splicing of BCL2L1 by promoting splicing toward isoform Bcl-X(S), and of SMN1. Can regulate alternative splicing of NRXN1 and NRXN3 in the laminin G-like domain 6 containing the evolutionary conserved neurexin alternative spliced segment 4 (AS4) involved in neurexin selective targeting to postsynaptic partners. In a neuronal activity-dependent manner cooperates synergistically with KHDRBS2/SLIM-1 in regulation of NRXN1 exon skipping at AS4. The cooperation with KHDRBS2/SLIM-1 is antagonistic for regulation of NXRN3 alternative splicing at AS4. In terms of biological role, isoform 3, which is expressed in growth-arrested cells only, inhibits S phase. This chain is KH domain-containing, RNA-binding, signal transduction-associated protein 1, found in Homo sapiens (Human).